The following is a 62-amino-acid chain: Cecropin-D (62 aa).

The first 22 residues, 1–22 (MNFTKILFFVVACVFAMRTVSA), serve as a signal peptide directing secretion. Positions 23–24 (AP) are cleaved as a propeptide — removed by a dipeptidylpeptidase. Lysine 60 bears the Lysine amide mark.

The protein belongs to the cecropin family.

Its subcellular location is the secreted. Its function is as follows. Cecropins have lytic and antibacterial activity against several Gram-positive and Gram-negative bacteria. This chain is Cecropin-D, found in Hyalophora cecropia (Cecropia moth).